Here is a 462-residue protein sequence, read N- to C-terminus: tRNA modification GTPase MnmE (462 aa).

Residues arginine 27, glutamate 89, and arginine 128 each contribute to the (6S)-5-formyl-5,6,7,8-tetrahydrofolate site. Positions 224 to 383 (GLATAIVGRP…LEAQIAKLFF (160 aa)) constitute a TrmE-type G domain. Asparagine 234 contacts K(+). Residues 234–239 (NVGKSS), 253–259 (TDVAGTT), and 278–281 (DTAG) contribute to the GTP site. Serine 238 serves as a coordination point for Mg(2+). K(+) is bound by residues threonine 253, valine 255, and threonine 258. Mg(2+) is bound at residue threonine 259. A (6S)-5-formyl-5,6,7,8-tetrahydrofolate-binding site is contributed by lysine 462.

This sequence belongs to the TRAFAC class TrmE-Era-EngA-EngB-Septin-like GTPase superfamily. TrmE GTPase family. As to quaternary structure, homodimer. Heterotetramer of two MnmE and two MnmG subunits. Requires K(+) as cofactor.

Its subcellular location is the cytoplasm. Exhibits a very high intrinsic GTPase hydrolysis rate. Involved in the addition of a carboxymethylaminomethyl (cmnm) group at the wobble position (U34) of certain tRNAs, forming tRNA-cmnm(5)s(2)U34. The sequence is that of tRNA modification GTPase MnmE from Latilactobacillus sakei subsp. sakei (strain 23K) (Lactobacillus sakei subsp. sakei).